The primary structure comprises 144 residues: Cytochrome c oxidase subunit 4 isoform 1, mitochondrial (144 aa).

The Mitochondrial matrix portion of the chain corresponds to 1–73 (SVVKSEDFSL…SFAEMNRGSN (73 aa)). An N6-acetyllysine; alternate modification is found at Lys-4. An N6-succinyllysine; alternate modification is found at Lys-4. Lys-28 carries the N6-acetyllysine modification. 2 positions are modified to phosphoserine: Ser-31 and Ser-33. Lys-35 bears the N6-acetyllysine; alternate mark. Lys-35 carries the N6-succinyllysine; alternate modification. Lys-42 is modified (N6-acetyllysine). Residues 74 to 99 (EWKTVVGGAMFFIGFTALIIMWQKHY) traverse the membrane as a helical segment. Residues 100–144 (VYGPLPQTFDKEWVGKQTKRMLDMKVNPIQGLASKWDYEKNEWKK) are Mitochondrial intermembrane-facing.

Belongs to the cytochrome c oxidase IV family. In terms of assembly, component of the cytochrome c oxidase (complex IV, CIV), a multisubunit enzyme composed of 14 subunits. The complex is composed of a catalytic core of 3 subunits MT-CO1, MT-CO2 and MT-CO3, encoded in the mitochondrial DNA, and 11 supernumerary subunits COX4I, COX5A, COX5B, COX6A, COX6B, COX6C, COX7A, COX7B, COX7C, COX8 and NDUFA4, which are encoded in the nuclear genome. The complex exists as a monomer or a dimer and forms supercomplexes (SCs) in the inner mitochondrial membrane with NADH-ubiquinone oxidoreductase (complex I, CI) and ubiquinol-cytochrome c oxidoreductase (cytochrome b-c1 complex, complex III, CIII), resulting in different assemblies (supercomplex SCI(1)III(2)IV(1) and megacomplex MCI(2)III(2)IV(2)). Interacts with PHB2; the interaction decreases in absence of SPHK2. Interacts with AFG1L. Interacts with ABCB7; this interaction allows the regulation of cellular iron homeostasis and cellular reactive oxygen species (ROS) levels in cardiomyocytes. Interacts with FLVCR2; this interaction occurs in the absence of heme and is disrupted upon heme binding. Interacts with IRGC.

It is found in the mitochondrion inner membrane. The protein operates within energy metabolism; oxidative phosphorylation. Component of the cytochrome c oxidase, the last enzyme in the mitochondrial electron transport chain which drives oxidative phosphorylation. The respiratory chain contains 3 multisubunit complexes succinate dehydrogenase (complex II, CII), ubiquinol-cytochrome c oxidoreductase (cytochrome b-c1 complex, complex III, CIII) and cytochrome c oxidase (complex IV, CIV), that cooperate to transfer electrons derived from NADH and succinate to molecular oxygen, creating an electrochemical gradient over the inner membrane that drives transmembrane transport and the ATP synthase. Cytochrome c oxidase is the component of the respiratory chain that catalyzes the reduction of oxygen to water. Electrons originating from reduced cytochrome c in the intermembrane space (IMS) are transferred via the dinuclear copper A center (CU(A)) of subunit 2 and heme A of subunit 1 to the active site in subunit 1, a binuclear center (BNC) formed by heme A3 and copper B (CU(B)). The BNC reduces molecular oxygen to 2 water molecules using 4 electrons from cytochrome c in the IMS and 4 protons from the mitochondrial matrix. This chain is Cytochrome c oxidase subunit 4 isoform 1, mitochondrial (COX4I1), found in Hylobates agilis (Agile gibbon).